Here is a 426-residue protein sequence, read N- to C-terminus: 6-Hydroxy-7-prenyldeoxybrevianamide E synthase notC' (426 aa).

Glu-94 is a binding site for substrate. Arg-105, Lys-191, and Tyr-193 together coordinate dimethylallyl diphosphate. Tyr-195 contributes to the substrate binding site. Residues Lys-267, Tyr-269, Gln-352, Tyr-354, Tyr-418, and Tyr-422 each coordinate dimethylallyl diphosphate.

Belongs to the tryptophan dimethylallyltransferase family.

It catalyses the reaction 6-hydroxydeoxybrevianamide E + dimethylallyl diphosphate = notoamide S + diphosphate. It functions in the pathway alkaloid biosynthesis. In terms of biological role, prenyltransferase; part of the gene cluster that mediates the biosynthesis of notoamide, a fungal indole alkaloid that belongs to a family of natural products containing a characteristic bicyclo[2.2.2]diazaoctane core. The first step of notoamide biosynthesis involves coupling of L-proline and L-tryptophan by the bimodular NRPS notE', to produce cyclo-L-tryptophan-L-proline called brevianamide F. The reverse prenyltransferase notF' then acts as a deoxybrevianamide E synthase and converts brevianamide F to deoxybrevianamide E via reverse prenylation at C-2 of the indole ring leading to the bicyclo[2.2.2]diazaoctane core. Deoxybrevianamide E is further hydroxylated at C-6 of the indole ring, likely catalyzed by the cytochrome P450 monooxygenase notG', to yield 6-hydroxy-deoxybrevianamide E. 6-hydroxy-deoxybrevianamide E is a specific substrate of the prenyltransferase notC' for normal prenylation at C-7 to produce 6-hydroxy-7-prenyl-deoxybrevianamide, also called notoamide S. As the proposed pivotal branching point in notoamide biosynthesis, notoamide S can be diverted to notoamide E through an oxidative pyran ring closure putatively catalyzed by either notH' cytochrome P450 monooxygenase or the notD' FAD-linked oxidoreductase. This step would be followed by an indole 2,3-epoxidation-initiated pinacol-like rearrangement catalyzed by the notB' FAD-dependent monooxygenase leading to the formation of notoamide C and notoamide D. On the other hand notoamide S is converted to notoamide T by notH' (or notD'), a bifunctional oxidase that also functions as the intramolecular Diels-Alderase responsible for generation of (-)-notoamide T. To generate antipodal (+)-notoaminide T, notH (or notD) in Aspergillus strain MF297-2 is expected to catalyze a Diels-Alder reaction leading to the opposite stereochemistry. The remaining oxidoreductase notD' (or notH') likely catalyzes the oxidative pyran ring formation to yield (-)-stephacidin A. The FAD-dependent monooxygenase notI' is highly similar to notB' and is predicted to catalyze a similar conversion from (-)-stephacidin A to (+)-notoamide B via the 2,3-epoxidation of (-)-stephacidin A followed by a pinacol-type rearrangement. Finally, it remains unclear which enzyme could be responsible for the final hydroxylation steps leading to notoamide A and sclerotiamide. This is 6-Hydroxy-7-prenyldeoxybrevianamide E synthase notC' from Aspergillus versicolor.